The chain runs to 33 residues: Maurocalcin (33 aa).

Disulfide bonds link Cys-3–Cys-17, Cys-10–Cys-21, and Cys-16–Cys-32. Residues 22 to 24 (KRR) are essential for stimulation of [3H]ryanodine binding to RYR.

It belongs to the scorpion calcin family. The non-natural D-maurocalcin (a chiral analog of maurocalcin composed of D-amino acids) completely loses the ability to stimulate [3H]ryanodine binding and calcium release. Its protease resistance, combined with its efficient cell penetration at concentrations devoid of cell toxicity, suggests that it should be an excellent vector for in vivo applications. In terms of tissue distribution, expressed by the venom gland.

Its subcellular location is the secreted. In terms of biological role, this toxin stabilizes ryanodine receptor 1 (RyR1) opening in a long-lasting subconductance state (48%-60% of the full conductance state). Furthermore, it triggers calcium release from sarcoplasmic vesicles (6.6 nM are enough to induce a sharp release, and 60% of the total calcium is released after toxin (100 nM) addition) probably by acting as a cell-penetrating peptide (CPP). In addition, it has been shown to dose-dependently stimulate ryanodine binding to RyR1 (EC(50)=12.5-26.4 nM). It also augments the bell-shaped calcium-[3H]ryanodine binding curve that is maximal at about 10 uM calcium concentration. It binds a different site as ryanodine. It acts synergistically with caffeine. In vivo, intracerebroventricular injection into mice causes death. In Scorpio palmatus (Israeli golden scorpion), this protein is Maurocalcin.